The primary structure comprises 230 residues: Voltage-gated hydrogen channel 1 (230 aa).

Topologically, residues 1 to 58 are cytoplasmic; it reads MAGCLRHFTSVGDDTKKREWKQEDVEVAYEEPLKNTPHPFIASYSFRGALKWLLSSHK. The chain crosses the membrane as a helical span at residues 59 to 79; sequence FQIVIICLVILDALFVLVEVL. Residues 80-96 lie on the Extracellular side of the membrane; that stretch reads LDLELLAEKVDHIIPEI. The helical transmembrane segment at 97–119 threads the bilayer; it reads FHYLSISVLTFFILEIAGKLYAF. The Cytoplasmic segment spans residues 120 to 127; the sequence is RLEFFHHK. A helical membrane pass occupies residues 128–148; that stretch reads FEVFDAAIVVISFIIDIVYIS. At 149 to 155 the chain is on the extracellular side; that stretch reads REDIFNA. A helical transmembrane segment spans residues 156–176; the sequence is VGLLILLRLWRVARIVNGVIV. Residues 177-230 are Cytoplasmic-facing; the sequence is SVKTRAEEKMHKLKEQKGSLLEKVAQLEQQCAQQEQEIGRLHKLLQEHNVFPAS. Residues 178–225 adopt a coiled-coil conformation; that stretch reads VKTRAEEKMHKLKEQKGSLLEKVAQLEQQCAQQEQEIGRLHKLLQEHN.

This sequence belongs to the hydrogen channel family. Homodimer.

It is found in the membrane. Its subcellular location is the cell membrane. Mediates the voltage-dependent proton permeability of excitable membranes. Forms a proton-selective channel through which protons may pass in accordance with their electrochemical gradient. In Xenopus laevis (African clawed frog), this protein is Voltage-gated hydrogen channel 1 (hvcn1).